A 315-amino-acid chain; its full sequence is Homoserine kinase (315 aa).

Position 96–106 (96–106 (PHSRGLGSSAA)) interacts with ATP.

It belongs to the GHMP kinase family. Homoserine kinase subfamily.

The protein resides in the cytoplasm. It catalyses the reaction L-homoserine + ATP = O-phospho-L-homoserine + ADP + H(+). It participates in amino-acid biosynthesis; L-threonine biosynthesis; L-threonine from L-aspartate: step 4/5. Functionally, catalyzes the ATP-dependent phosphorylation of L-homoserine to L-homoserine phosphate. The polypeptide is Homoserine kinase (Mycolicibacterium paratuberculosis (strain ATCC BAA-968 / K-10) (Mycobacterium paratuberculosis)).